A 1089-amino-acid polypeptide reads, in one-letter code: Importin subunit beta-3 (1089 aa).

S2 is subject to N-acetylserine. HEAT repeat units lie at residues 6 to 39, 44 to 78, 96 to 129, 138 to 165, 175 to 207, 216 to 252, 260 to 295, 304 to 359, 361 to 395, 399 to 439, 441 to 481, 484 to 524, 526 to 568, 571 to 613, 615 to 689, 692 to 735, 742 to 781, 788 to 849, 852 to 890, 898 to 930, 938 to 978, 986 to 1017, 1028 to 1063, and 1066 to 1089; these read EEVN…EEWI, IEYL…ALKA, KEVL…IAEC, PELL…ILTT, INSI…YFKQ, LGIL…LVEL, MFDQ…FSEN, QNYG…ALKL, GEYL…SSAA, ADVL…STDF, PFIQ…FSEF, KDIL…AEAA, NKFI…GFAV, EKFH…CRIL, DDFV…ATLL, QFAV…LLAA, ELVL…IKVM, EDQL…LKTT, HYLK…IQYG, KNAF…CAQY, VCIP…LYAY, DTYT…QLIE, NISA…LLGF, and SSDA…KWFA. The residue at position 830 (T830) is a Phosphothreonine.

Belongs to the importin beta family. Importin beta-3 subfamily. In terms of assembly, interacts with Ran (GSP1); interacts specifically with the GTP-bound form of Ran (GTP-Ran), protecting it from GTP hydrolysis and nucleotide exchange. Interacts with RPL25; this interaction is dissociated by binding to Ran-GTP. Interacts with YAP1; this interaction is dissociated by binding to Ran-GTP. Interacts with NOP1; via its rg-NLS. Interacts with SOF1; via its cNLS. Interacts with histones H3 and H4; via their NLS. Interacts with ABF1.

The protein localises to the cytoplasm. Its subcellular location is the nucleus. Its function is as follows. Functions in nuclear protein import as nuclear transport receptor. Serves as receptor for classical and arginine/glycine-rich nuclear localization signals (cNLS and rg-NLS) in cargo substrates. Its predominant cargo substrate seems to be ribosomal proteins and ribosome biogenesis trans- and cis-acting factors. Required for nuclear transport of YAP1, NOP1 and SOF1. Mediates the nuclear import of histones H3 and H4. Mediates docking of the importin/substrate complex to the nuclear pore complex (NPC) through binding to repeat-containing nucleoporins. The complex is subsequently translocated through the pore by an energy requiring, Ran-dependent mechanism. At the nucleoplasmic side of the NPC, GTP-Ran binding leads to release of the cargo. The importin is re-exported from the nucleus to the cytoplasm where GTP hydrolysis releases Ran from importin. The directionality of nuclear import is thought to be conferred by an asymmetric distribution of the GTP- and GDP-bound forms of Ran between the cytoplasm and nucleus. Functionally, plays a role in protein secretion. This chain is Importin subunit beta-3, found in Saccharomyces cerevisiae (strain ATCC 204508 / S288c) (Baker's yeast).